An 886-amino-acid polypeptide reads, in one-letter code: Alanine--tRNA ligase (886 aa).

Residues histidine 564, histidine 568, cysteine 666, and histidine 670 each coordinate Zn(2+).

Belongs to the class-II aminoacyl-tRNA synthetase family. Zn(2+) serves as cofactor.

It localises to the cytoplasm. The enzyme catalyses tRNA(Ala) + L-alanine + ATP = L-alanyl-tRNA(Ala) + AMP + diphosphate. Functionally, catalyzes the attachment of alanine to tRNA(Ala) in a two-step reaction: alanine is first activated by ATP to form Ala-AMP and then transferred to the acceptor end of tRNA(Ala). Also edits incorrectly charged Ser-tRNA(Ala) and Gly-tRNA(Ala) via its editing domain. This Prochlorococcus marinus (strain MIT 9515) protein is Alanine--tRNA ligase.